The following is a 599-amino-acid chain: 1-deoxy-D-xylulose-5-phosphate synthase (599 aa).

Thiamine diphosphate-binding positions include histidine 63 and 104-106; that span reads GHS. Aspartate 135 contacts Mg(2+). Residues 136–137, asparagine 164, tyrosine 271, and glutamate 352 each bind thiamine diphosphate; that span reads GA. Asparagine 164 is a Mg(2+) binding site.

It belongs to the transketolase family. DXPS subfamily. In terms of assembly, homodimer. The cofactor is Mg(2+). Thiamine diphosphate is required as a cofactor.

The enzyme catalyses D-glyceraldehyde 3-phosphate + pyruvate + H(+) = 1-deoxy-D-xylulose 5-phosphate + CO2. It functions in the pathway metabolic intermediate biosynthesis; 1-deoxy-D-xylulose 5-phosphate biosynthesis; 1-deoxy-D-xylulose 5-phosphate from D-glyceraldehyde 3-phosphate and pyruvate: step 1/1. In terms of biological role, catalyzes the acyloin condensation reaction between C atoms 2 and 3 of pyruvate and glyceraldehyde 3-phosphate to yield 1-deoxy-D-xylulose-5-phosphate (DXP). This chain is 1-deoxy-D-xylulose-5-phosphate synthase, found in Nitratiruptor sp. (strain SB155-2).